We begin with the raw amino-acid sequence, 162 residues long: Peptide deformylase (162 aa).

Fe cation is bound by residues Cys91 and His133. Residue Glu134 is part of the active site. His137 is a binding site for Fe cation.

The protein belongs to the polypeptide deformylase family. It depends on Fe(2+) as a cofactor.

The catalysed reaction is N-terminal N-formyl-L-methionyl-[peptide] + H2O = N-terminal L-methionyl-[peptide] + formate. Removes the formyl group from the N-terminal Met of newly synthesized proteins. Requires at least a dipeptide for an efficient rate of reaction. N-terminal L-methionine is a prerequisite for activity but the enzyme has broad specificity at other positions. The sequence is that of Peptide deformylase from Finegoldia magna (strain ATCC 29328 / DSM 20472 / WAL 2508) (Peptostreptococcus magnus).